A 309-amino-acid polypeptide reads, in one-letter code: Probable HTH-type transcriptional regulator LtrA (309 aa).

One can recognise an HTH lysR-type domain in the interval 1-61; sequence MNLNLLPDLA…QRTTRKLRLS (61 aa). Residues 21–40 constitute a DNA-binding region (H-T-H motif); sequence FSAVARQNGITPSAVSRSVS.

The protein belongs to the LysR transcriptional regulatory family.

The protein is Probable HTH-type transcriptional regulator LtrA (ltrA) of Klebsiella pneumoniae.